We begin with the raw amino-acid sequence, 515 residues long: Proline--tRNA ligase (515 aa).

Belongs to the class-II aminoacyl-tRNA synthetase family. ProS type 3 subfamily. As to quaternary structure, homodimer.

The protein localises to the cytoplasm. It carries out the reaction tRNA(Pro) + L-proline + ATP = L-prolyl-tRNA(Pro) + AMP + diphosphate. Catalyzes the attachment of proline to tRNA(Pro) in a two-step reaction: proline is first activated by ATP to form Pro-AMP and then transferred to the acceptor end of tRNA(Pro). The chain is Proline--tRNA ligase from Novosphingobium aromaticivorans (strain ATCC 700278 / DSM 12444 / CCUG 56034 / CIP 105152 / NBRC 16084 / F199).